Reading from the N-terminus, the 680-residue chain is Galactose oxidase (680 aa).

An N-terminal signal peptide occupies residues 1–24 (MKHFLSLALCFSSINAVAVTVPHK). Residues 25–41 (SGGTGSPEGSLQFLSLR) constitute a propeptide that is removed on maturation. An F5/8 type C domain is found at 42 to 189 (ASAPIGSAIS…SIAEINVFQA (148 aa)). Cysteine 59 and cysteine 68 are oxidised to a cystine. Kelch repeat units follow at residues 223-268 (RVLM…HDMF), 279-321 (QIVV…TMSD), 323-372 (RVFT…LYRS), 436-490 (KILT…VLPD), and 492-544 (STFI…LLLP). Residues 269-313 (CPGISMDGNGQIVVTGGNDAKKTSLYDSSSDSWIPGPDMQVARGY) constitute a cross-link (3'-(S-cysteinyl)-tyrosine (Cys-Tyr)). Tyrosine 313 serves as a coordination point for Cu cation. Cu cation contacts are provided by tyrosine 536 and histidine 537. The active-site Proton acceptor is the tyrosine 536. A disulfide bridge links cysteine 556 with cysteine 559. Histidine 622 is a binding site for Cu cation.

As to quaternary structure, monomer. The cofactor is Cu(2+). In terms of processing, galactose oxidase contains a protein-derived free radical cofactor. In the active state, Tyr-313, which is cross-linked to Cys-269 via a thioether bond, is oxidized to a radical and acts with Cu(2+) as a two-electron acceptor in the oxidation reaction. The cross-link is believed to modulate the redox potential of the tyrosyl radical, which is further stabilized by a stacking interaction with Trp-331 in the active site. The post-translational formation of the cross-link is closely linked to the propeptide cleavage event, and both are copper-dependent, autocatalytic processes. The propeptide may act as an intramolecular chaperone, facilitating thioester bond formation and copper binding by positioning of active-site residues, including copper ligands.

The protein localises to the secreted. It carries out the reaction D-galactose + O2 = D-galacto-hexodialdose + H2O2. Its function is as follows. Catalyzes the sterospecific oxidation of primary alcohols to the corresponding aldehydes. The biologically relevant substrate of the enzyme is not known as the enzyme exhibits broad substrate specificity from small alcohols through sugars to oligo- and polysaccharides. In Gibberella zeae (strain ATCC MYA-4620 / CBS 123657 / FGSC 9075 / NRRL 31084 / PH-1) (Wheat head blight fungus), this protein is Galactose oxidase (GAOA).